Here is a 196-residue protein sequence, read N- to C-terminus: Protein TEX261 (196 aa).

The next 5 membrane-spanning stretches (helical) occupy residues 3–23 (FMYL…TLAV), 42–62 (SRII…LYVF), 70–90 (IGVG…FPFI), 97–117 (FILS…FFAE), and 125–145 (VLAY…VSLS).

The protein belongs to the SVP26 family.

Its subcellular location is the membrane. This chain is Protein TEX261 (TEX261), found in Homo sapiens (Human).